Here is a 631-residue protein sequence, read N- to C-terminus: Probable protein phosphatase 2C 31 (631 aa).

2 disordered regions span residues Gly119–Phe142 and Leu205–Asn231. Over residues Ala131–Asp140 the composition is skewed to polar residues. The PPM-type phosphatase domain occupies Asp221–Phe622. Mn(2+) contacts are provided by Asp261 and Gly262. Positions Gly324 to Asp347 are disordered. Asp550 and Asp613 together coordinate Mn(2+).

This sequence belongs to the PP2C family. Mg(2+) serves as cofactor. Requires Mn(2+) as cofactor.

The catalysed reaction is O-phospho-L-seryl-[protein] + H2O = L-seryl-[protein] + phosphate. The enzyme catalyses O-phospho-L-threonyl-[protein] + H2O = L-threonyl-[protein] + phosphate. In Oryza sativa subsp. japonica (Rice), this protein is Probable protein phosphatase 2C 31.